We begin with the raw amino-acid sequence, 361 residues long: Peptide chain release factor 1 (361 aa).

At Gln-235 the chain carries N5-methylglutamine. The disordered stretch occupies residues 284 to 306 (SQQATAEAMTRKLQVGSGDRSQR).

The protein belongs to the prokaryotic/mitochondrial release factor family. Methylated by PrmC. Methylation increases the termination efficiency of RF1.

It localises to the cytoplasm. In terms of biological role, peptide chain release factor 1 directs the termination of translation in response to the peptide chain termination codons UAG and UAA. The sequence is that of Peptide chain release factor 1 from Xylella fastidiosa (strain 9a5c).